Reading from the N-terminus, the 82-residue chain is ATP synthase subunit c, chloroplastic (82 aa).

The next 2 helical transmembrane spans lie at 4–24 (IISA…AIGP) and 57–77 (LAFM…LLFA).

This sequence belongs to the ATPase C chain family. In terms of assembly, F-type ATPases have 2 components, F(1) - the catalytic core - and F(0) - the membrane proton channel. F(1) has five subunits: alpha(3), beta(3), gamma(1), delta(1), epsilon(1). F(0) has four main subunits: a(1), b(1), b'(1) and c(10-14). The alpha and beta chains form an alternating ring which encloses part of the gamma chain. F(1) is attached to F(0) by a central stalk formed by the gamma and epsilon chains, while a peripheral stalk is formed by the delta, b and b' chains.

The protein resides in the plastid. It is found in the chloroplast thylakoid membrane. F(1)F(0) ATP synthase produces ATP from ADP in the presence of a proton or sodium gradient. F-type ATPases consist of two structural domains, F(1) containing the extramembraneous catalytic core and F(0) containing the membrane proton channel, linked together by a central stalk and a peripheral stalk. During catalysis, ATP synthesis in the catalytic domain of F(1) is coupled via a rotary mechanism of the central stalk subunits to proton translocation. In terms of biological role, key component of the F(0) channel; it plays a direct role in translocation across the membrane. A homomeric c-ring of between 10-14 subunits forms the central stalk rotor element with the F(1) delta and epsilon subunits. The polypeptide is ATP synthase subunit c, chloroplastic (Trieres chinensis (Marine centric diatom)).